A 247-amino-acid polypeptide reads, in one-letter code: UDP-2,3-diacylglucosamine hydrolase (247 aa).

5 residues coordinate Mn(2+): D8, H10, D41, N79, and H114. Residue 79–80 participates in substrate binding; the sequence is NR. D122, S160, D171, R174, and H202 together coordinate substrate. H202 and H204 together coordinate Mn(2+).

This sequence belongs to the LpxH family. Requires Mn(2+) as cofactor.

Its subcellular location is the cell inner membrane. It carries out the reaction UDP-2-N,3-O-bis[(3R)-3-hydroxytetradecanoyl]-alpha-D-glucosamine + H2O = 2-N,3-O-bis[(3R)-3-hydroxytetradecanoyl]-alpha-D-glucosaminyl 1-phosphate + UMP + 2 H(+). Its pathway is glycolipid biosynthesis; lipid IV(A) biosynthesis; lipid IV(A) from (3R)-3-hydroxytetradecanoyl-[acyl-carrier-protein] and UDP-N-acetyl-alpha-D-glucosamine: step 4/6. Its function is as follows. Hydrolyzes the pyrophosphate bond of UDP-2,3-diacylglucosamine to yield 2,3-diacylglucosamine 1-phosphate (lipid X) and UMP by catalyzing the attack of water at the alpha-P atom. Involved in the biosynthesis of lipid A, a phosphorylated glycolipid that anchors the lipopolysaccharide to the outer membrane of the cell. This is UDP-2,3-diacylglucosamine hydrolase from Xanthomonas axonopodis pv. citri (strain 306).